A 286-amino-acid polypeptide reads, in one-letter code: Polyamine aminopropyltransferase (286 aa).

Positions 5-238 constitute a PABS domain; sequence TMWHETLHDQ…GIMTFAWATD (234 aa). Position 33 (Gln-33) interacts with S-methyl-5'-thioadenosine. Residues His-64 and Asp-88 each contribute to the spermidine site. Residues Glu-108 and 140-141 each bind S-methyl-5'-thioadenosine; that span reads DG. Catalysis depends on Asp-158, which acts as the Proton acceptor. 158-161 serves as a coordination point for spermidine; sequence DCTD. Pro-165 lines the S-methyl-5'-thioadenosine pocket.

The protein belongs to the spermidine/spermine synthase family. As to quaternary structure, homodimer or homotetramer.

It localises to the cytoplasm. It catalyses the reaction S-adenosyl 3-(methylsulfanyl)propylamine + putrescine = S-methyl-5'-thioadenosine + spermidine + H(+). It participates in amine and polyamine biosynthesis; spermidine biosynthesis; spermidine from putrescine: step 1/1. In terms of biological role, catalyzes the irreversible transfer of a propylamine group from the amino donor S-adenosylmethioninamine (decarboxy-AdoMet) to putrescine (1,4-diaminobutane) to yield spermidine. The chain is Polyamine aminopropyltransferase from Salmonella typhi.